Here is a 319-residue protein sequence, read N- to C-terminus: MTTQTSTGLRHQTVLLDEAVDALIWRDDGIYIDGTFGRGGHSRRILERLGPGGRLVAFDKDPAAITEAGTVEDARFAIEHDSFAQMAQCLDARGIERVAGVLLDLGISSPQIDEGERGFSFRMDGPLDMRMDTTRGITAAQWLAEADERDIARVIRDYGEERFAVQIAKAIVARRGQSGDRGPLDRTSELAALVAQAVKTREKGQDPATRTFQALRIHVNQELADLETGLKAAFDRLEQGGRLVVISFHSLEDRIVKRFMQALARPEQSAAPELRRAPLRAHELPAPQLRLLGRVKPSEAEVSANPRARSAIMRVAERC.

S-adenosyl-L-methionine is bound by residues 39 to 41 (GGH), Asp-59, Phe-83, Asp-104, and Gln-111.

It belongs to the methyltransferase superfamily. RsmH family.

Its subcellular location is the cytoplasm. It catalyses the reaction cytidine(1402) in 16S rRNA + S-adenosyl-L-methionine = N(4)-methylcytidine(1402) in 16S rRNA + S-adenosyl-L-homocysteine + H(+). Its function is as follows. Specifically methylates the N4 position of cytidine in position 1402 (C1402) of 16S rRNA. In Ralstonia pickettii (strain 12D), this protein is Ribosomal RNA small subunit methyltransferase H.